The primary structure comprises 270 residues: uncharacterized protein (270 aa).

Over 1-37 (MATHTSKRRIHRWENNELSEENSTIIYFPARGLMWTH) the chain is Cytoplasmic. Residues 38 to 58 (FPFVLGICLEFVGYVLKIVFI) form a helical membrane-spanning segment. Residues 59-65 (NSPSIST) are Extracellular-facing. A helical membrane pass occupies residues 66 to 86 (FIAQSVLLLIAPSLYALSIFM). The Cytoplasmic segment spans residues 87–93 (LFSKMAR). Residues 94–114 (LILMEAYMLIPAKFSTVSFVV) form a helical membrane-spanning segment. Residues 115–140 (ADMIGRVLQAVGGGLLSSWNSRNTGR) are Extracellular-facing. A helical transmembrane segment spans residues 141 to 161 (ILIIVGLFIQIFCYTFLTFSQ). Residues 162 to 181 (LFLHYKMKATPSKIVRDSNE) are Cytoplasmic-facing. The chain crosses the membrane as a helical span at residues 182–202 (WFQYNFILLAGILLVNGRTIV). At 203-220 (RVVQFLMGLQSYIGQHEW) the chain is on the extracellular side. The helical transmembrane segment at 221–241 (CLYVFDTVLMFLLPLIFLATF) threads the bilayer. At 242-270 (RARNLFKLQDKSVNIQLNKLLDKESVSED) the chain is on the cytoplasmic side.

This sequence belongs to the lipid-translocating exporter (LTE) (TC 9.A.26.1) family.

It localises to the membrane. This is an uncharacterized protein from Saccharomyces cerevisiae (strain ATCC 204508 / S288c) (Baker's yeast).